A 1779-amino-acid polypeptide reads, in one-letter code: Fibronectin type III domain-containing protein 1 (1779 aa).

An N-terminal signal peptide occupies residues 1–29 (MAPEARASPRLLLRAALLLLAALLPVASS). 4 consecutive Fibronectin type-III domains span residues 33-126 (PVDH…KAPR), 103-203 (PNKP…AEED), 207-302 (VPED…TPES), and 307-402 (APEN…IPTT). A compositionally biased stretch (polar residues) spans 400–413 (PTTSSTEASVQPNG). 4 disordered regions span residues 400-442 (PTTS…MPPA), 459-1108 (NGVA…RNLD), 1120-1227 (EENT…KPNG), and 1330-1401 (PTTT…PPGT). The segment covering 423-437 (QQPSSSAPKVAASSQ) has biased composition (low complexity). Over residues 493 to 506 (NPRSSRLETLNQKQ) the composition is skewed to polar residues. Residues 534–554 (SRKEGMDRRGPSLDPHPHPRV) are compositionally biased toward basic and acidic residues. Polar residues-rich tracts occupy residues 557–570 (SASSAYHQLSSTDN) and 590–607 (SSGSSPKNPGRSRPTSAP). Residues 629 to 640 (ASSSTSRQSHSS) show a composition bias toward low complexity. Phosphoserine is present on serine 651. Over residues 676-694 (HASSSHTTSRTASSSHPSA) the composition is skewed to low complexity. Serine 699 carries the post-translational modification Phosphoserine. A compositionally biased stretch (basic and acidic residues) spans 707 to 720 (DSDRAAEDTIRRAE). Polar residues-rich tracts occupy residues 763-784 (PSVSPQSTSASKVLTRSPSLPA) and 861-875 (PLSSKAQGFQQSTTD). A compositionally biased stretch (low complexity) spans 879 to 904 (PQTSPASTSRQPSPARPPASRSQPSP). Composition is skewed to polar residues over residues 957 to 971 (APQNQNEGAQSTYED) and 1003 to 1020 (VGSQSWSSDNRPQPSQAG). Residues 1085 to 1097 (LSTSVKKWPSSSS) are compositionally biased toward low complexity. Over residues 1098 to 1108 (PRDKYADRNLD) the composition is skewed to basic and acidic residues. 2 stretches are compositionally biased toward polar residues: residues 1147 to 1159 (NPATASPIANTHS) and 1166 to 1177 (RAPSSYSSTTPM). The span at 1330–1389 (PTTTMPPSTTTTTVPPTTTLPPTTTTTRRTTTTRRTTTTRRPTTTTRATRRTTTTTTTPE) shows a compositional bias: low complexity. The 95-residue stretch at 1543 to 1637 (APRNITVVAM…PSVSFVTESD (95 aa)) folds into the Fibronectin type-III 5 domain. The N-linked (GlcNAc...) asparagine glycan is linked to asparagine 1546.

The protein localises to the secreted. May be an activator of G protein signaling. The chain is Fibronectin type III domain-containing protein 1 (Fndc1) from Rattus norvegicus (Rat).